The chain runs to 223 residues: 7-cyano-7-deazaguanine synthase (223 aa).

Residue 15-25 participates in ATP binding; sequence FSGGQDSTTCL. 4 residues coordinate Zn(2+): Cys-191, Cys-200, Cys-203, and Cys-206.

It belongs to the QueC family. As to quaternary structure, homodimer. Zn(2+) is required as a cofactor.

It carries out the reaction 7-carboxy-7-deazaguanine + NH4(+) + ATP = 7-cyano-7-deazaguanine + ADP + phosphate + H2O + H(+). It participates in purine metabolism; 7-cyano-7-deazaguanine biosynthesis. In terms of biological role, catalyzes the ATP-dependent conversion of 7-carboxy-7-deazaguanine (CDG) to 7-cyano-7-deazaguanine (preQ(0)). The sequence is that of 7-cyano-7-deazaguanine synthase from Staphylococcus epidermidis (strain ATCC 35984 / DSM 28319 / BCRC 17069 / CCUG 31568 / BM 3577 / RP62A).